Reading from the N-terminus, the 262-residue chain is Phosphonates import ATP-binding protein PhnC (262 aa).

The ABC transporter domain occupies 5–253; the sequence is IRVEKLAKTF…RFDHLYRSIN (249 aa). Residue 37–44 participates in ATP binding; sequence GPSGSGKS.

It belongs to the ABC transporter superfamily. Phosphonates importer (TC 3.A.1.9.1) family. In terms of assembly, the complex is composed of two ATP-binding proteins (PhnC), two transmembrane proteins (PhnE) and a solute-binding protein (PhnD).

The protein localises to the cell inner membrane. It carries out the reaction phosphonate(out) + ATP + H2O = phosphonate(in) + ADP + phosphate + H(+). Functionally, part of the ABC transporter complex PhnCDE involved in phosphonates import. Responsible for energy coupling to the transport system. This Escherichia coli O6:K15:H31 (strain 536 / UPEC) protein is Phosphonates import ATP-binding protein PhnC.